Here is a 95-residue protein sequence, read N- to C-terminus: Small ribosomal subunit protein bS6 (95 aa).

This sequence belongs to the bacterial ribosomal protein bS6 family.

In terms of biological role, binds together with bS18 to 16S ribosomal RNA. This is Small ribosomal subunit protein bS6 from Thermoanaerobacter pseudethanolicus (strain ATCC 33223 / 39E) (Clostridium thermohydrosulfuricum).